The following is a 453-amino-acid chain: MDRTINVILKPLRRFAIQKPNASLLLFAATIVAMVLANSPWADRYHQLLAFPIDLQAGQFNFFAHHGETMSMLAFVNDALMAVFFFVIGLEIKQEVLIGELSSVRKALLPIIAACGGMIVPVLFYMLVCNTPPEVNGAAIPMATDIAFALAVLGLLGKRVPLSMRIFLTALAVVDDIGGIIIIALFYSGHIAFEPLLISLIVLALLYVGGKFRVHNRLFFYIGGFIVWLLFLESGIHPTIAGVLIAFTVPARPVVKLDDFTCDMTGYLNMLDYTEVRQSRKAEVLTPTQIQVLNNIHTLADKTISPLQTIADKLHPLVNYVILPLFAFVNAGVTFGDIQPQTLVNVPLAVFVGLFVGKTLGIFSFSYLFACTPFASMPTGMSKRNLFGVSMLGGIGFTVALFIANLSFDGSTAAGADLLNQAKLGVFTGSFISGLCGYLVLKWVLPKEKVETI.

11 consecutive transmembrane segments (helical) span residues 22–42 (ASLL…SPWA), 72–92 (MLAF…GLEI), 108–128 (LLPI…YMLV), 137–157 (GAAI…GLLG), 166–186 (IFLT…IALF), 189–209 (GHIA…LYVG), 218–238 (LFFY…GIHP), 316–336 (PLVN…VTFG), 343–363 (LVNV…LGIF), 386–406 (LFGV…IANL), and 424–444 (LGVF…LKWV).

This sequence belongs to the NhaA Na(+)/H(+) (TC 2.A.33) antiporter family.

The protein localises to the cell inner membrane. It carries out the reaction Na(+)(in) + 2 H(+)(out) = Na(+)(out) + 2 H(+)(in). In terms of biological role, na(+)/H(+) antiporter that extrudes sodium in exchange for external protons. The chain is Na(+)/H(+) antiporter NhaA from Parabacteroides distasonis (strain ATCC 8503 / DSM 20701 / CIP 104284 / JCM 5825 / NCTC 11152).